The chain runs to 382 residues: PqqA peptide cyclase (382 aa).

The Radical SAM core domain maps to Val8–Ala223. [4Fe-4S] cluster-binding residues include Cys22, Cys26, and Cys29.

It belongs to the radical SAM superfamily. PqqE family. In terms of assembly, interacts with PqqD. The interaction is necessary for activity of PqqE. [4Fe-4S] cluster is required as a cofactor.

It carries out the reaction [PQQ precursor protein] + S-adenosyl-L-methionine = E-Y cross-linked-[PQQ precursor protein] + 5'-deoxyadenosine + L-methionine + H(+). The protein operates within cofactor biosynthesis; pyrroloquinoline quinone biosynthesis. Functionally, catalyzes the cross-linking of a glutamate residue and a tyrosine residue in the PqqA protein as part of the biosynthesis of pyrroloquinoline quinone (PQQ). The sequence is that of PqqA peptide cyclase from Erwinia tasmaniensis (strain DSM 17950 / CFBP 7177 / CIP 109463 / NCPPB 4357 / Et1/99).